A 227-amino-acid polypeptide reads, in one-letter code: MGRGKIAIKRIDNTMNRQVTFSKRRGGLMKKARELAILCDADVGLIVFSCTGRLYDFSSSSMKSIIERYQEAGEEHCRLLNPMSEAKFWQREVTTLRQQVQNLHHNNRQLLGEEISNFTVRDLQLLQNQVEMSLHSIRNKKDQLLAEEILKLNEKGSLVQKENSELRKKFNIAHQRNIELHKKLNSGESTSSEQVTRSSKDPGESSTPRDSRVCIDLELSQKEVEDE.

In terms of domain architecture, MADS-box spans 1–61 (MGRGKIAIKR…GRLYDFSSSS (61 aa)). The region spanning 86-176 (AKFWQREVTT…RKKFNIAHQR (91 aa)) is the K-box domain. A disordered region spans residues 183 to 227 (KLNSGESTSSEQVTRSSKDPGESSTPRDSRVCIDLELSQKEVEDE). Residues 186 to 197 (SGESTSSEQVTR) show a composition bias toward polar residues. The span at 198-227 (SSKDPGESSTPRDSRVCIDLELSQKEVEDE) shows a compositional bias: basic and acidic residues.

As to expression, expressed in seedling roots.

The protein resides in the nucleus. In terms of biological role, probable transcription factor. The polypeptide is MADS-box transcription factor 25 (MADS25) (Oryza sativa subsp. japonica (Rice)).